The primary structure comprises 426 residues: MTTPYLFEDSESFARKLDAEDALRGYRDAFHFPPGPDGKPVVYLAGNSLGLQPRNAARYIQEELEDWARLGVEGHHHGRHPWLHYHELVTEHAARLVGAKPLEVVVMNTLSVNLHLMMVSFYRPTKQRFKILVEAGAFPSDQYAVASQVRFHGYDAREAVLELKPREGEETLRTEDILETIERHGHEVALVMLGSVNYLTGQAFDLAAITKAAHAKGCFVGFDLAHGAGNLRLSLHDDGPDFAVWCSYKYLNAGPGALGGVFVHERHAHTKDLPRFEGWWGHDKQTRFQMGPTFSALPGAEGWQLSNPPIFQLAALRASLELFDQAGMAALRAKSERLTGYLEFLLDRLPEGFVRITTPRDVKQRGAQLSLRFRGEPQGLLKRLGDAGIICDFRKPDIIRAAPAPLYNSFTDVYRFVKTLEGHARE.

Pyridoxal 5'-phosphate-binding positions include leucine 110, serine 111, 138–141 (FPSD), aspartate 223, histidine 226, and tyrosine 248. The residue at position 249 (lysine 249) is an N6-(pyridoxal phosphate)lysine. Pyridoxal 5'-phosphate contacts are provided by tryptophan 279 and asparagine 307.

Belongs to the kynureninase family. As to quaternary structure, homodimer. Pyridoxal 5'-phosphate is required as a cofactor.

The catalysed reaction is L-kynurenine + H2O = anthranilate + L-alanine + H(+). It carries out the reaction 3-hydroxy-L-kynurenine + H2O = 3-hydroxyanthranilate + L-alanine + H(+). The protein operates within amino-acid degradation; L-kynurenine degradation; L-alanine and anthranilate from L-kynurenine: step 1/1. Its pathway is cofactor biosynthesis; NAD(+) biosynthesis; quinolinate from L-kynurenine: step 2/3. Its function is as follows. Catalyzes the cleavage of L-kynurenine (L-Kyn) and L-3-hydroxykynurenine (L-3OHKyn) into anthranilic acid (AA) and 3-hydroxyanthranilic acid (3-OHAA), respectively. This chain is Kynureninase, found in Myxococcus xanthus (strain DK1622).